The primary structure comprises 684 residues: Pre-mRNA-splicing factor CLF1 (684 aa).

14 HAT repeats span residues 43-75 (DWQRRKRTEYETVLKRNRLDLRQWMRYAQFEFD), 77-109 (KDIRRARSIYERALLVDHGFIPLWIQYIDSEIK), 111-143 (KNINHARNLLDRATNALPRVDKLWFKYLLLEES), 145-176 (GNQGIVRGIYTRWCSFEPGPDAWDSFIEFETR), 178-209 (LNFENVRNIYSKFVLVHPQIDTWLKWVRFEQT), 211-251 (GDIS…WEAS), 253-285 (GEYERSRTLYRLAVERWPISEALKEQQIQFEKK), 295-327 (IVIAKRKAEYEQYLKSDPYHYSTWWVYIDLVEE), 332-364 (QLTSAFQSFIELAKPKSLVKDSSWKRYIRICVR), 374-410 (NDLPTIRSVYQDILDIIPHKKFTFGKLWIMYAEFEIR), 412-443 (NNLLKARKILGVSLGKSPKPKVFKYYINLEIR), 445-477 (KEFDRVRKLYEKYIDFNPSSVQSWLDYAELEEN), 518-550 (AEYEKARELYEKYLILSRYDVNIWINQALFEST), and 584-622 (ENKHHTRAIFEKAISYFKEHNEDKKRQQVLQSLLEYEKV).

Belongs to the crooked-neck family. As to quaternary structure, associated with the spliceosome.

It localises to the nucleus. In terms of biological role, involved in pre-mRNA splicing and cell cycle progression. Required for the spliceosome assembly and initiation of the DNA replication. This chain is Pre-mRNA-splicing factor CLF1 (CLF1), found in Kluyveromyces lactis (strain ATCC 8585 / CBS 2359 / DSM 70799 / NBRC 1267 / NRRL Y-1140 / WM37) (Yeast).